The sequence spans 163 residues: UPF0262 protein RPB_4349 (163 aa).

This sequence belongs to the UPF0262 family.

The chain is UPF0262 protein RPB_4349 from Rhodopseudomonas palustris (strain HaA2).